The sequence spans 132 residues: Arsenate reductase 1 (132 aa).

Active-site nucleophile residues include Cys-10, Cys-82, and Cys-89. 2 disulfide bridges follow: Cys-10-Cys-82 and Cys-82-Cys-89.

This sequence belongs to the low molecular weight phosphotyrosine protein phosphatase family. Thioredoxin-coupled ArsC subfamily.

Its subcellular location is the cytoplasm. It catalyses the reaction arsenate + [thioredoxin]-dithiol + H(+) = arsenite + [thioredoxin]-disulfide + H2O. Catalyzes the reduction of arsenate [As(V)] to arsenite [As(III)]. This Staphylococcus epidermidis (strain ATCC 35984 / DSM 28319 / BCRC 17069 / CCUG 31568 / BM 3577 / RP62A) protein is Arsenate reductase 1.